The following is a 66-amino-acid chain: Large ribosomal subunit protein bL33c (66 aa).

Belongs to the bacterial ribosomal protein bL33 family.

It is found in the plastid. The protein localises to the chloroplast. In Manihot esculenta (Cassava), this protein is Large ribosomal subunit protein bL33c.